Consider the following 481-residue polypeptide: ATP synthase subunit beta, chloroplastic (481 aa).

Residue 162–169 (GGAGVGKT) participates in ATP binding.

This sequence belongs to the ATPase alpha/beta chains family. As to quaternary structure, F-type ATPases have 2 components, CF(1) - the catalytic core - and CF(0) - the membrane proton channel. CF(1) has five subunits: alpha(3), beta(3), gamma(1), delta(1), epsilon(1). CF(0) has four main subunits: a(1), b(1), b'(1) and c(9-12).

The protein resides in the plastid. Its subcellular location is the chloroplast thylakoid membrane. It carries out the reaction ATP + H2O + 4 H(+)(in) = ADP + phosphate + 5 H(+)(out). In terms of biological role, produces ATP from ADP in the presence of a proton gradient across the membrane. The catalytic sites are hosted primarily by the beta subunits. The protein is ATP synthase subunit beta, chloroplastic of Chlorella vulgaris (Green alga).